The primary structure comprises 896 residues: Chromatin assembly factor 1 subunit A-A (896 aa).

Disordered regions lie at residues 1–23 (MPGK…KKMV), 185–377 (TSTS…EEEK), and 552–610 (DSDE…DPEN). Residues 10 to 21 (VMQSSTKSNTKK) are compositionally biased toward polar residues. The span at 211–226 (ASVSSSSSPVSLSSPD) shows a compositional bias: low complexity. The span at 227–236 (AQTGSQFRNR) shows a compositional bias: polar residues. The span at 237 to 246 (SSPSTSTTPT) shows a compositional bias: low complexity. Residues 255–284 (SADKNKTKDKDKQRQAEKEERERAKKEARS) are compositionally biased toward basic and acidic residues. Basic residues predominate over residues 285-302 (AKKKKRQGLLKNLQRKRG). A compositionally biased stretch (basic and acidic residues) spans 308–377 (SGKEYKKEKK…EEKRLKEEEK (70 aa)). 3 stretches are compositionally biased toward acidic residues: residues 552-563 (DSDEEWEEEEPG), 572-586 (ENDD…DDDG), and 595-607 (SDDE…ECTD). The segment at 642 to 678 (CVWWDSKASEISLLQKFSACILESPAVDEELAQEISS) is necessary for homodimerization, competence for chromatin assembly. The segment at 724-743 (SDAAGNESTSPNVTPQTPSN) is disordered. Residues 729 to 743 (NESTSPNVTPQTPSN) are compositionally biased toward polar residues.

It belongs to the CHAF1A family. In terms of assembly, homodimer.

It is found in the nucleus. Functionally, involved in chromatin assembly in DNA replication and DNA repair. The protein is Chromatin assembly factor 1 subunit A-A (chaf1a-a) of Xenopus laevis (African clawed frog).